The chain runs to 197 residues: uncharacterized protein (197 aa).

2 disordered regions span residues 1–30 (MSDD…PKVV) and 115–174 (PSLK…KQEL). Low complexity predominate over residues 21-30 (KPTSTTPKVV). The segment covering 123-137 (KVDEDDDQIYEDKEE) has biased composition (acidic residues). A compositionally biased stretch (basic residues) spans 157 to 170 (KSNKKVAPKQKKKS).

This is an uncharacterized protein from Dictyostelium discoideum (Social amoeba).